The chain runs to 473 residues: Cysteine--tRNA ligase (473 aa).

C28 serves as a coordination point for Zn(2+). The 'HIGH' region signature appears at 30–40 (PTVYNMPHIGN). The Zn(2+) site is built by C213, H238, and E242. Positions 270-274 (KMSKS) match the 'KMSKS' region motif. An ATP-binding site is contributed by K273.

Belongs to the class-I aminoacyl-tRNA synthetase family. It depends on Zn(2+) as a cofactor.

It localises to the cytoplasm. It carries out the reaction tRNA(Cys) + L-cysteine + ATP = L-cysteinyl-tRNA(Cys) + AMP + diphosphate. The polypeptide is Cysteine--tRNA ligase (Methanosarcina acetivorans (strain ATCC 35395 / DSM 2834 / JCM 12185 / C2A)).